We begin with the raw amino-acid sequence, 324 residues long: Signal peptidase I (324 aa).

The Periplasmic portion of the chain corresponds to 1–3; sequence MAN. A helical membrane pass occupies residues 4-22; sequence MFALILVIATLVTGILWCV. The Cytoplasmic segment spans residues 23–58; that stretch reads DKFVFAPKRRARQAAAQTASGDALDNATLNKVAPKP. A helical transmembrane segment spans residues 59–77; sequence GWLETGASVFPVLAIVLIV. Residues 78–324 lie on the Periplasmic side of the membrane; it reads RSFLYEPFQI…VRLSRIGGIH (247 aa). Catalysis depends on residues serine 91 and lysine 146.

Belongs to the peptidase S26 family.

It localises to the cell inner membrane. It catalyses the reaction Cleavage of hydrophobic, N-terminal signal or leader sequences from secreted and periplasmic proteins.. This Salmonella typhi protein is Signal peptidase I (lepB).